The following is an 800-amino-acid chain: Phenylalanine--tRNA ligase beta subunit (800 aa).

Residues 39–154 enclose the tRNA-binding domain; that stretch reads TKDIKNLVVG…ESQVPGTDAL (116 aa). The B5 domain occupies 408–483; that stretch reads AFITPIDITA…RIYGYDDIPS (76 aa). Mg(2+) contacts are provided by Asp461, Asp467, Glu470, and Glu471. In terms of domain architecture, FDX-ACB spans 708–800; it reads PRFPGMSRDI…ALIEQGAVIR (93 aa).

Belongs to the phenylalanyl-tRNA synthetase beta subunit family. Type 1 subfamily. As to quaternary structure, tetramer of two alpha and two beta subunits. Mg(2+) serves as cofactor.

It localises to the cytoplasm. The enzyme catalyses tRNA(Phe) + L-phenylalanine + ATP = L-phenylalanyl-tRNA(Phe) + AMP + diphosphate + H(+). The chain is Phenylalanine--tRNA ligase beta subunit from Staphylococcus aureus (strain Mu50 / ATCC 700699).